A 493-amino-acid chain; its full sequence is Glutamyl-tRNA(Gln) amidotransferase subunit A (493 aa).

Active-site charge relay system residues include lysine 79 and serine 159. Serine 183 serves as the catalytic Acyl-ester intermediate.

The protein belongs to the amidase family. GatA subfamily. As to quaternary structure, heterotrimer of A, B and C subunits.

It catalyses the reaction L-glutamyl-tRNA(Gln) + L-glutamine + ATP + H2O = L-glutaminyl-tRNA(Gln) + L-glutamate + ADP + phosphate + H(+). Allows the formation of correctly charged Gln-tRNA(Gln) through the transamidation of misacylated Glu-tRNA(Gln) in organisms which lack glutaminyl-tRNA synthetase. The reaction takes place in the presence of glutamine and ATP through an activated gamma-phospho-Glu-tRNA(Gln). This is Glutamyl-tRNA(Gln) amidotransferase subunit A from Rhizobium johnstonii (strain DSM 114642 / LMG 32736 / 3841) (Rhizobium leguminosarum bv. viciae).